The following is a 281-amino-acid chain: Trypsin zeta (281 aa).

The first 23 residues, 1 to 23 (MSSSSWLGCLLAVLLSALALSQG), serve as a signal peptide directing secretion. Positions 24–39 (LPLLEDLDENSFPDGR) are cleaved as a propeptide — activation peptide. Residues 40–279 (IVGGYVTDIA…LRPWIDAVRA (240 aa)) form the Peptidase S1 domain. A disulfide bridge links Cys-73 with Cys-89. Active-site charge relay system residues include His-88 and Asp-135. Cystine bridges form between Cys-199–Cys-219 and Cys-231–Cys-255. Ser-235 acts as the Charge relay system in catalysis.

This sequence belongs to the peptidase S1 family.

It is found in the secreted. Its subcellular location is the extracellular space. It carries out the reaction Preferential cleavage: Arg-|-Xaa, Lys-|-Xaa.. In Drosophila erecta (Fruit fly), this protein is Trypsin zeta (zetaTry).